The following is a 385-amino-acid chain: Meiosis-specific protein MEI4 (385 aa).

The segment at 1 to 126 is interaction with REC114; that stretch reads MDVQKWYLRT…LSQHFVESCT (126 aa). A disordered region spans residues 86 to 110; that stretch reads AQEPKSSESTLTSMEDSGCDLSNEQ. Positions 92 to 107 are enriched in polar residues; it reads SESTLTSMEDSGCDLS.

The protein belongs to the MEI4L family. As to quaternary structure, part of the MCD recombinosome complex, at least composed of IHO1, REC114 and MEI4. Forms a complex with REC114; the interaction is required for MEI4 stability. Interacts (via N-terminal domain) with REC114 (via C-terminal domain). Interacts with IHO1.

The protein resides in the chromosome. In terms of biological role, required for DNA double-strand breaks (DSBs) formation in unsynapsed regions during meiotic recombination. Probably acts by forming a complex with IHO1 and REC114, which activates DSBs formation in unsynapsed regions, an essential step to ensure completion of synapsis. The protein is Meiosis-specific protein MEI4 of Homo sapiens (Human).